Consider the following 889-residue polypeptide: MPKTNSSAASTNANPSSLQQHTPMMQQYLKIKAEHPDILLFYRMGDFYELFFDDAKKAAELLDISLTARGKSGGNAIPMAGVPYHAVENYLARLVKMGQSVAIVEQVGDPATSKGPVERKVQRIVTPGTVSDEALLNDKQDSILAAVFCPTQKANQELIFGYATLDVTSGRFTLCELSGEEALAAELQRTNPVELLYPDDFAYSHLINQRKGLRRRPQWEFDLQTATNQLTSQFGTNELSGFGVQNHQVGICAAGCVMQYIKDTQRSALPHIDRIVLESHNDTVVMDAATRRNLELTFNLSGGIENTLASILDKTSTPMGSRLLQRWIHRPLTDVTVLKKRQRNIQGLMESPYTQLQSALKKIGDMQRVLARLALRSARPRDFARLRQAFALLPDIQHYLEHEISHTSESAQPSDLLHLAEKISQYPDFADLLERAVIEAPPVLIRDGGVIKEGYNEELDRLRELSKGATDYLEELELREKERTGIASLKVGYNRVHGYFIEVSRSQSDLVPVEYVRRQTLKNNERYIIPELKEHEDNVLSSQSRSLALEKRLYDELFDLLLPQLTQLMQSADALAELDVLTNLAERAESLDYHRPELCPQSGIHFSQGRHPVVEQVSDAPFIANPINVNPDRRMLVITGPNMGGKSTYMRQTALIVLMAYIGSYIPAQDAQIGPIDRIFTRIGASDDLASGRSTFMVEMTETANILNNATANSLVLMDEIGRGTSTYDGLSLAWACAEYLATKLQSFTLFATHYFELTGLADALPELANVHLDAVEHGESIRFMHAVQDGAANKSYGLQVAQLAGVPKLVVQAAKRKLHELETGDISKQGRQETSPVNTVYATEKVETQLDLLSQTSEAEDLLHSIQPDDLTPKQALDYLYQLKKLVR.

The span at 1–17 (MPKTNSSAASTNANPSS) shows a compositional bias: low complexity. A disordered region spans residues 1 to 20 (MPKTNSSAASTNANPSSLQQ). Residue 640 to 647 (GPNMGGKS) participates in ATP binding.

This sequence belongs to the DNA mismatch repair MutS family.

In terms of biological role, this protein is involved in the repair of mismatches in DNA. It is possible that it carries out the mismatch recognition step. This protein has a weak ATPase activity. This Pseudoalteromonas atlantica (strain T6c / ATCC BAA-1087) protein is DNA mismatch repair protein MutS.